Here is a 315-residue protein sequence, read N- to C-terminus: Biotin synthase (315 aa).

A Radical SAM core domain is found at 39 to 266 (NSLQFATLLS…KSAIRLTAGR (228 aa)). [4Fe-4S] cluster is bound by residues Cys-54, Cys-58, and Cys-61. [2Fe-2S] cluster-binding residues include Cys-98, Cys-129, Cys-189, and Arg-261.

Belongs to the radical SAM superfamily. Biotin synthase family. As to quaternary structure, homodimer. Requires [4Fe-4S] cluster as cofactor. [2Fe-2S] cluster is required as a cofactor.

It catalyses the reaction (4R,5S)-dethiobiotin + (sulfur carrier)-SH + 2 reduced [2Fe-2S]-[ferredoxin] + 2 S-adenosyl-L-methionine = (sulfur carrier)-H + biotin + 2 5'-deoxyadenosine + 2 L-methionine + 2 oxidized [2Fe-2S]-[ferredoxin]. It functions in the pathway cofactor biosynthesis; biotin biosynthesis; biotin from 7,8-diaminononanoate: step 2/2. Functionally, catalyzes the conversion of dethiobiotin (DTB) to biotin by the insertion of a sulfur atom into dethiobiotin via a radical-based mechanism. This chain is Biotin synthase, found in Legionella pneumophila (strain Paris).